The chain runs to 288 residues: ATP phosphoribosyltransferase (288 aa).

The protein belongs to the ATP phosphoribosyltransferase family. Long subfamily. Requires Mg(2+) as cofactor.

The protein localises to the cytoplasm. The enzyme catalyses 1-(5-phospho-beta-D-ribosyl)-ATP + diphosphate = 5-phospho-alpha-D-ribose 1-diphosphate + ATP. Its pathway is amino-acid biosynthesis; L-histidine biosynthesis; L-histidine from 5-phospho-alpha-D-ribose 1-diphosphate: step 1/9. With respect to regulation, feedback inhibited by histidine. In terms of biological role, catalyzes the condensation of ATP and 5-phosphoribose 1-diphosphate to form N'-(5'-phosphoribosyl)-ATP (PR-ATP). Has a crucial role in the pathway because the rate of histidine biosynthesis seems to be controlled primarily by regulation of HisG enzymatic activity. The chain is ATP phosphoribosyltransferase from Methanococcus maripaludis (strain C7 / ATCC BAA-1331).